Consider the following 66-residue polypeptide: ATP synthase F(0) complex subunit 8 (66 aa).

A helical membrane pass occupies residues 8 to 24 (IWLLAVVIVLTTLMIFL). Lys54 is modified (N6-acetyllysine; alternate). Lys54 carries the N6-succinyllysine; alternate modification. Lys57 is modified (N6-acetyllysine).

It belongs to the ATPase protein 8 family. In terms of assembly, component of the ATP synthase complex composed at least of ATP5F1A/subunit alpha, ATP5F1B/subunit beta, ATP5MC1/subunit c (homooctomer), MT-ATP6/subunit a, MT-ATP8/subunit 8, ATP5ME/subunit e, ATP5MF/subunit f, ATP5MG/subunit g, ATP5MK/subunit k, ATP5MJ/subunit j, ATP5F1C/subunit gamma, ATP5F1D/subunit delta, ATP5F1E/subunit epsilon, ATP5PF/subunit F6, ATP5PB/subunit b, ATP5PD/subunit d, ATP5PO/subunit OSCP. ATP synthase complex consists of a soluble F(1) head domain (subunits alpha(3) and beta(3)) - the catalytic core - and a membrane F(0) domain - the membrane proton channel (subunits c, a, 8, e, f, g, k and j). These two domains are linked by a central stalk (subunits gamma, delta, and epsilon) rotating inside the F1 region and a stationary peripheral stalk (subunits F6, b, d, and OSCP). Interacts with PRICKLE3.

Its subcellular location is the mitochondrion membrane. Functionally, subunit 8, of the mitochondrial membrane ATP synthase complex (F(1)F(0) ATP synthase or Complex V) that produces ATP from ADP in the presence of a proton gradient across the membrane which is generated by electron transport complexes of the respiratory chain. ATP synthase complex consist of a soluble F(1) head domain - the catalytic core - and a membrane F(1) domain - the membrane proton channel. These two domains are linked by a central stalk rotating inside the F(1) region and a stationary peripheral stalk. During catalysis, ATP synthesis in the catalytic domain of F(1) is coupled via a rotary mechanism of the central stalk subunits to proton translocation. In vivo, can only synthesize ATP although its ATP hydrolase activity can be activated artificially in vitro. Part of the complex F(0) domain. This chain is ATP synthase F(0) complex subunit 8, found in Mammuthus primigenius (Siberian woolly mammoth).